Consider the following 275-residue polypeptide: Adenylate kinase (275 aa).

Residue 54-59 (GAGKGT) participates in ATP binding. The tract at residues 74 to 103 (ATGDMLRSQVAKKTPLGREAKKIMDQGGLV) is NMP. Residues Thr75, Arg80, 101 to 103 (GLV), 130 to 133 (GFPR), and Gln137 each bind AMP. Residues 171-208 (GRLVHPASGRSYHRVFNPPKAEMKDDITGEPLVSRSDD) are LID. Residues Arg172 and 181-182 (SY) contribute to the ATP site. 2 residues coordinate AMP: Arg205 and Arg216. Position 244 (Gln244) interacts with ATP.

It belongs to the adenylate kinase family. AK2 subfamily. As to quaternary structure, monomer.

It is found in the cytoplasm. The protein resides in the cytosol. Its subcellular location is the mitochondrion intermembrane space. The catalysed reaction is AMP + ATP = 2 ADP. Catalyzes the reversible transfer of the terminal phosphate group between ATP and AMP. Plays an important role in cellular energy homeostasis and in adenine nucleotide metabolism. Adenylate kinase activity is critical for regulation of the phosphate utilization and the AMP de novo biosynthesis pathways. The polypeptide is Adenylate kinase (adk1) (Sclerotinia sclerotiorum (strain ATCC 18683 / 1980 / Ss-1) (White mold)).